The primary structure comprises 305 residues: MSMSTLRHFLWLGALLLATIQVSALPTAQDLICNGHPEYCDRRYSELSFVGAHNSPFVGPLLQHNQDISVTEQLDFGIRFLQGQTHKNDDGVFSMCHTSCILEDAGSVSSYLQTVKTWLDSHPNEVVTLLITNGDGLDIKEFDDAFNAVNGIKDYTFAPKSKLALGDWPTLRELITTGKRLIVFVDSKADTNRFPYLLDEFSYYFETPFSTTDENFPQCKLDRPAGGKPDGQMYLVNHTLNVNVFGIFLPDRFKAGRTNAAVGQGSIGAQVDLCNSIYHRKPNVVLLDFITEGDVLKAERTMNGL.

The N-terminal stretch at 1 to 24 (MSMSTLRHFLWLGALLLATIQVSA) is a signal peptide. Residues 25-189 (LPTAQDLICN…RLIVFVDSKA (165 aa)) form the PI-PLC X-box domain. Active-site residues include His-53 and His-97. A glycan (N-linked (GlcNAc...) asparagine) is linked at Asn-237.

It is found in the secreted. This is PI-PLC X domain-containing protein 1 from Arthroderma benhamiae (strain ATCC MYA-4681 / CBS 112371) (Trichophyton mentagrophytes).